A 577-amino-acid polypeptide reads, in one-letter code: Cell adhesion molecule CEACAM20 (577 aa).

Residues 1-30 form the signal peptide; the sequence is MELAGFHCCSWTVILLSALLPTTWRPPAAA. The Extracellular portion of the chain corresponds to 31-430; it reads HFIHRADLLS…LQSSSMSPGA (400 aa). 4 consecutive Ig-like C2-type domains span residues 48 to 137, 142 to 223, 239 to 324, and 329 to 415; these read PLAK…ASLT, PDPV…TNLS, PNIE…LKLT, and PDQV…ASVL. The cysteines at positions 72 and 120 are disulfide-linked. Residues Asn78 and Asn102 are each glycosylated (N-linked (GlcNAc...) asparagine). 2 cysteine pairs are disulfide-bonded: Cys259–Cys307 and Cys358–Cys399. Asn289 carries N-linked (GlcNAc...) asparagine glycosylation. Residues 431-451 traverse the membrane as a helical segment; it reads IAGIVIGILVAIALAIGLGYF. At 452–577 the chain is on the cytoplasmic side; the sequence is LYSTKDRWTR…SLYCKITPSA (126 aa). The interval 461–568 is disordered; it reads RRRSASDTTS…YEKLLNSNHS (108 aa). Polar residues predominate over residues 474 to 484; sequence IPPTSVMQSTP. Positions 516 to 526 are enriched in basic and acidic residues; it reads DSPEQFYEKKP. Pro residues predominate over residues 536–551; it reads KPLPQIPKQPLMPPGP. Phosphotyrosine occurs at positions 559 and 570.

It belongs to the immunoglobulin superfamily. CEA family. In terms of assembly, interacts (via extracellular domain) with PTPRH (via extracellular domain); the interaction dephosphorylates CEACAM20. Interacts (phosphorylated form) with SYK (via SH2 domains); the interaction further enhances CEACAM20 phosphorylation. In terms of processing, phosphorylated on tyrosine residues by SYK, SRC and FYN in vitro. As to expression, strongly expressed in the small intestine and colon (at protein level). Minimal expression in other tissues (at protein level). Highly expressed in cecum, colon, ileum, jejunum, and testis, and also detected at lower levels in salivary gland and thymus.

The protein localises to the cell projection. The protein resides in the microvillus membrane. It is found in the apical cell membrane. Its function is as follows. Together with the tyrosine-protein kinase SYK, enhances production of the cytokine CXCL8/IL-8 via the NFKB pathway and may thus have a role in the intestinal immune response. The protein is Cell adhesion molecule CEACAM20 of Mus musculus (Mouse).